We begin with the raw amino-acid sequence, 101 residues long: uncharacterized protein (101 aa).

The N-terminal stretch at 1 to 17 (MKKAAVLAVVLSLGLAG) is a signal peptide. The N-palmitoyl cysteine moiety is linked to residue Cys-18. Cys-18 carries S-diacylglycerol cysteine lipidation.

Its subcellular location is the cell membrane. This is an uncharacterized protein from Pasteurella multocida (strain Pm70).